The chain runs to 436 residues: Aminopeptidase C (436 aa).

Active-site residues include C68, H356, and N378.

Belongs to the peptidase C1 family. Homohexamer.

The catalysed reaction is Inactivates bleomycin B2 (a cytotoxic glycometallopeptide) by hydrolysis of a carboxyamide bond of beta-aminoalanine, but also shows general aminopeptidase activity. The specificity varies somewhat with source, but amino acid arylamides of Met, Leu and Ala are preferred.. Hydrolyzes naphthylamide-substituted amino acids as well as di- and tripeptides in which the half-cystine residue is involved in a disulfide loop, notably in oxytocin and vasopressin. Also has a bleomycin hydrolase activity. This chain is Aminopeptidase C (pepC), found in Lactococcus lactis subsp. cremoris (Streptococcus cremoris).